The following is a 260-amino-acid chain: Snake venom serine protease homolog 1 (260 aa).

Residues 1–18 (MVLIRVLANLLILQLSYA) form the signal peptide. A propeptide spanning residues 19-24 (QKSSEL) is cleaved from the precursor. Residues 25 to 251 (IIGGDECNIN…HLDWIKSIIA (227 aa)) form the Peptidase S1 domain. Intrachain disulfides connect Cys-31/Cys-165, Cys-52/Cys-68, Cys-100/Cys-258, Cys-144/Cys-212, Cys-176/Cys-191, and Cys-202/Cys-227. N-linked (GlcNAc...) asparagine glycans are attached at residues Asn-83, Asn-123, and Asn-124.

The protein belongs to the peptidase S1 family. Snake venom subfamily. As to expression, expressed by the venom gland.

The protein resides in the secreted. Its function is as follows. Snake venom serine protease homolog that may act in the hemostasis system of the prey. The protein is Snake venom serine protease homolog 1 of Trimeresurus stejnegeri (Chinese green tree viper).